A 92-amino-acid chain; its full sequence is MTDTDVQAPKIEFPCERYPIKVIGDAGEGFADLVVEVIQRHAPDLDSSTLRLRDSRNGRFLSVQVLITATGVEQLQAIHLDLRATGRVHMVL.

The protein belongs to the UPF0250 family.

This Azotobacter vinelandii (strain DJ / ATCC BAA-1303) protein is UPF0250 protein Avin_08440.